The following is a 276-amino-acid chain: Non-homologous end joining protein Ku (276 aa).

The Ku domain maps to 11 to 177 (ISFGLVHIPI…PEEIRSMEPL (167 aa)). The segment at 256-276 (QVKTQQKKEAAPKKERRRKTS) is disordered.

It belongs to the prokaryotic Ku family. In terms of assembly, homodimer. Interacts with LigD.

With LigD forms a non-homologous end joining (NHEJ) DNA repair enzyme, which repairs dsDNA breaks with reduced fidelity. Binds linear dsDNA with 5'- and 3'- overhangs but not closed circular dsDNA nor ssDNA. Recruits and stimulates the ligase activity of LigD. This chain is Non-homologous end joining protein Ku, found in Heliobacterium modesticaldum (strain ATCC 51547 / Ice1).